The sequence spans 694 residues: Maintenance of telomere capping protein 4 (694 aa).

A compositionally biased stretch (basic and acidic residues) spans 1-12 (MTHTNEHDHKAE). The disordered stretch occupies residues 1-26 (MTHTNEHDHKAEQQQNGRGDTTTETV). The span at 13 to 26 (QQQNGRGDTTTETV) shows a compositional bias: polar residues. Residue serine 85 is modified to Phosphoserine. Low complexity predominate over residues 211 to 222 (YSPSNESSGSSS). 3 disordered regions span residues 211–287 (YSPS…PEAQ), 325–437 (AKGS…TETY), and 465–511 (KTSN…PVGL). Positions 223–243 (SRRHHGHHIHPRRHLQHHSRV) are enriched in basic residues. A compositionally biased stretch (polar residues) spans 244 to 257 (RTANSVHSNTQSLT). Threonine 263 bears the Phosphothreonine mark. Residues 276–287 (MITKIATTPEAQ) are compositionally biased toward polar residues. Residues 403–417 (SNGGTSRRSSNNGES) show a composition bias toward low complexity. Over residues 418–437 (ISTNSSKSSMGITFGNTETY) the composition is skewed to polar residues. Over residues 471-485 (LRAEGEQALESDKEL) the composition is skewed to basic and acidic residues. Phosphoserine is present on residues serine 481 and serine 491. Position 493 is a phosphotyrosine (tyrosine 493). The helical transmembrane segment at 655–675 (RLLEFGIVLVLWTIWFLFSVL) threads the bilayer.

The protein resides in the membrane. It localises to the cytoplasm. This is Maintenance of telomere capping protein 4 (MTC4) from Saccharomyces cerevisiae (strain ATCC 204508 / S288c) (Baker's yeast).